The following is a 206-amino-acid chain: Large ribosomal subunit protein uL4 (206 aa).

The segment at 51-96 (LTRAEVKHSTKKPFRQKGTGNARAGMTSTPNRRGGGRAFPNKPDEN) is disordered.

It belongs to the universal ribosomal protein uL4 family. Part of the 50S ribosomal subunit.

One of the primary rRNA binding proteins, this protein initially binds near the 5'-end of the 23S rRNA. It is important during the early stages of 50S assembly. It makes multiple contacts with different domains of the 23S rRNA in the assembled 50S subunit and ribosome. Functionally, forms part of the polypeptide exit tunnel. This Chromobacterium violaceum (strain ATCC 12472 / DSM 30191 / JCM 1249 / CCUG 213 / NBRC 12614 / NCIMB 9131 / NCTC 9757 / MK) protein is Large ribosomal subunit protein uL4.